A 234-amino-acid chain; its full sequence is Leucyl/phenylalanyl-tRNA--protein transferase (234 aa).

It belongs to the L/F-transferase family.

The protein resides in the cytoplasm. It carries out the reaction N-terminal L-lysyl-[protein] + L-leucyl-tRNA(Leu) = N-terminal L-leucyl-L-lysyl-[protein] + tRNA(Leu) + H(+). The enzyme catalyses N-terminal L-arginyl-[protein] + L-leucyl-tRNA(Leu) = N-terminal L-leucyl-L-arginyl-[protein] + tRNA(Leu) + H(+). The catalysed reaction is L-phenylalanyl-tRNA(Phe) + an N-terminal L-alpha-aminoacyl-[protein] = an N-terminal L-phenylalanyl-L-alpha-aminoacyl-[protein] + tRNA(Phe). Functionally, functions in the N-end rule pathway of protein degradation where it conjugates Leu, Phe and, less efficiently, Met from aminoacyl-tRNAs to the N-termini of proteins containing an N-terminal arginine or lysine. In Escherichia coli O157:H7 (strain EC4115 / EHEC), this protein is Leucyl/phenylalanyl-tRNA--protein transferase.